A 654-amino-acid polypeptide reads, in one-letter code: Endoplasmic reticulum chaperone BiP (654 aa).

The N-terminal stretch at 1 to 18 is a signal peptide; that stretch reads MKFPMVAAALLLLCAVRA. A required for interaction with ELAPOR1 region spans residues 1 to 80; it reads MKFPMVAAAL…EGERLIGDAA (80 aa). 36 to 39 serves as a coordination point for ATP; the sequence is GTTY. At Ser86 the chain carries Phosphoserine. Residue Lys96 coordinates ATP. Lys125 carries the N6-acetyllysine modification. Residues 125 to 280 form a nucleotide-binding (NBD) region; sequence KPYIQVDIGG…KKKTGKDVRK (156 aa). Tyr160 is subject to 3'-nitrotyrosine. Lys213 is subject to N6-acetyllysine. Residue 227–229 participates in ATP binding; the sequence is GGT. Residue Lys271 is modified to N6-acetyllysine. An ATP-binding site is contributed by 293-300; it reads EKAKRALS. Lys326 is modified (N6-acetyllysine). Lys352 participates in a covalent cross-link: Glycyl lysine isopeptide (Lys-Gly) (interchain with G-Cter in SUMO2). Lys353 is subject to N6-acetyllysine; alternate. A Glycyl lysine isopeptide (Lys-Gly) (interchain with G-Cter in SUMO1); alternate cross-link involves residue Lys353. 364–367 contributes to the ATP binding site; sequence GSTR. The segment at 409 to 419 is interdomain linker; sequence QDTGDLVLLDV. The interval 420–500 is substrate-binding (SBD); it reads CPLTLGIETV…PRGVPQIEVT (81 aa). Lys447 carries the N6-succinyllysine modification. Arg492 bears the Omega-N-methylarginine mark. O-AMP-threonine; alternate is present on Thr518. Residue Thr518 is modified to Phosphothreonine; alternate. Lys585 carries the N6,N6,N6-trimethyllysine; by METTL21A; in vitro modification. Position 585 is an N6,N6-dimethyllysine; alternate (Lys585). Lys585 is subject to N6-methyllysine; alternate. Lys591 carries the post-translational modification N6-methyllysine. The segment at 632 to 654 is disordered; that stretch reads SKLYGSAGPPPTGEEDTSEKDEL. Residues Thr643 and Thr648 each carry the phosphothreonine modification. Residues 644-654 are compositionally biased toward acidic residues; it reads GEEDTSEKDEL. Ser649 carries the post-translational modification Phosphoserine. Positions 651-654 match the Prevents secretion from ER motif; sequence KDEL.

The protein belongs to the heat shock protein 70 family. As to quaternary structure, monomer and homooligomer; homooligomerization via the interdomain linker inactivates the chaperone activity and acts as a storage of HSPA5/BiP molecules. Interacts with DNAJC1 (via J domain). Component of an EIF2 complex at least composed of CELF1/CUGBP1, CALR, CALR3, EIF2S1, EIF2S2, HSP90B1 and HSPA5. Part of a large chaperone multiprotein complex comprising DNAJB11, HSP90B1, HSPA5, HYOU, PDIA2, PDIA4, PDIA6, PPIB, SDF2L1, UGGT1 and very small amounts of ERP29, but not, or at very low levels, CALR nor CANX. Interacts with TMEM132A and TRIM21. May form a complex with ERLEC1, OS9, SEL1L and SYVN1. Interacts with DNAJC10. Interacts with DNAJB9/ERdj4; leading to recruit HSPA5/BiP to ERN1/IRE1. Interacts with ERN1/IRE1 (via luminal domain); the interaction takes place following interaction with DNAJB9/ERdj4 and leads to inactivate ERN1/IRE1, the interaction also competitively inhibits ERN1 interaction with MANF. Interacts directly with MANF (via SAP domain); the interaction inhibits ATP binding to HSPA5/BiP and subsequent nucleotide exchange. Interacts with EIF2AK3/PERK (via luminal domain); interaction leads to inactivate EIF2AK3/PERK. Interacts with MX1. Interacts with METTL23. Interacts with CEMIP; the interaction induces calcium leakage from the endoplasmic reticulum and cell migration. Interacts with PCSK4 form; the interaction takes place in the endoplasmic reticulum. Interacts with CIPC. Interacts with CCDC88B (via C-terminus); the interaction opposes ERN1-mediated JNK activation, protecting against apoptosis. Interacts with INPP5K; necessary for INPP5K localization at the endoplasmic reticulum. Interacts with LOXL2; leading to activate the ERN1/IRE1-XBP1 pathway of the unfolded protein response. Interacts with CLU under stressed condition; interaction increases CLU protein stability; facilitates its retrotranslocation and redistribution to the mitochondria; cooperatively suppress stress-induced apoptosis by stabilizing mitochondrial membrane integrity. Interacts with CCDC47. Interacts with CLN3. Interacts with ELAPOR1; may regulate the function of HSPA5 in apoptosis and cell proliferation. Interacts with CASP7. Interacts with ILDR2; the interaction stabilizes ILDR2 expression. Interacts with ADAM7. Post-translationally, in unstressed cells, AMPylation at Thr-518 by FICD inactivates the chaperome activity: AMPylated form is locked in a relatively inert state and only weakly stimulated by J domain-containing proteins. In response to endoplasmic reticulum stress, de-AMPylation by the same protein, FICD, restores the chaperone activity.

It is found in the endoplasmic reticulum lumen. The protein resides in the melanosome. It localises to the cytoplasm. Its subcellular location is the cell surface. It catalyses the reaction ATP + H2O = ADP + phosphate + H(+). The chaperone activity is regulated by ATP-induced allosteric coupling of the nucleotide-binding (NBD) and substrate-binding (SBD) domains. In the ADP-bound and nucleotide-free (apo) states, the two domains have little interaction. In contrast, in the ATP-bound state the two domains are tightly coupled, which results in drastically accelerated kinetics in both binding and release of polypeptide substrates. J domain-containing co-chaperones (DNAJB9/ERdj4 or DNAJC10/ERdj5) stimulate the ATPase activity and are required for efficient substrate recognition by HSPA5/BiP. Homooligomerization inactivates participating HSPA5/BiP protomers and probably act as reservoirs to store HSPA5/BiP molecules when they are not needed by the cell. In terms of biological role, endoplasmic reticulum chaperone that plays a key role in protein folding and quality control in the endoplasmic reticulum lumen. Involved in the correct folding of proteins and degradation of misfolded proteins via its interaction with DNAJC10/ERdj5, probably to facilitate the release of DNAJC10/ERdj5 from its substrate. Acts as a key repressor of the EIF2AK3/PERK and ERN1/IRE1-mediated unfolded protein response (UPR). In the unstressed endoplasmic reticulum, recruited by DNAJB9/ERdj4 to the luminal region of ERN1/IRE1, leading to disrupt the dimerization of ERN1/IRE1, thereby inactivating ERN1/IRE1. Also binds and inactivates EIF2AK3/PERK in unstressed cells. Accumulation of misfolded protein in the endoplasmic reticulum causes release of HSPA5/BiP from ERN1/IRE1 and EIF2AK3/PERK, allowing their homodimerization and subsequent activation. Plays an auxiliary role in post-translational transport of small presecretory proteins across endoplasmic reticulum (ER). May function as an allosteric modulator for SEC61 channel-forming translocon complex, likely cooperating with SEC62 to enable the productive insertion of these precursors into SEC61 channel. Appears to specifically regulate translocation of precursors having inhibitory residues in their mature region that weaken channel gating. May also play a role in apoptosis and cell proliferation. This is Endoplasmic reticulum chaperone BiP from Cricetulus griseus (Chinese hamster).